A 1906-amino-acid chain; its full sequence is Zinc metalloprotease ZmpB (1906 aa).

The first 33 residues, 1–33 (MFKKDRFSIRKIKGVVGSVFLGSLLMAPSVVDA), serve as a signal peptide directing secretion. Positions 34 to 76 (ATYHYVNKEIISQEAKDLIQTGKPDRNEVVYGLVYQKDQLPQT) are excised as a propeptide. The LPXTG sorting signal motif lies at 73–77 (LPQTG). Position 76 is a pentaglycyl murein peptidoglycan amidated threonine (T76). 2 helical membrane passes run 77–98 (GTEA…LLIY) and 105–127 (SVFL…DPVA). Topologically, residues 128 to 1906 (TLALASREGV…TNSFKTSIFK (1779 aa)) are extracellular. A disordered region spans residues 178–436 (VETPQSITNQ…KASSVSPTDY (259 aa)). A compositionally biased stretch (polar residues) spans 181-196 (PQSITNQEQARTENQV). 5 stretches are compositionally biased toward basic and acidic residues: residues 201-239 (EAPK…KEDS), 252-262 (VESKPEEKVAV), 271-335 (KPAE…KEET), 352-375 (KQTE…REDE), and 383-408 (EPEK…DKIK). A run of 4 repeats spans residues 277 to 291 (KVEQ…REDE), 293 to 315 (APVE…ETPK), 361 to 375 (KVEQ…REDE), and 380 to 402 (APVE…ETPK). Residues 277-375 (KVEQAGEPVA…GEPVAPREDE (99 aa)) form a 2 X 15 AA repeats of K-V-E-Q-A-G-E-P-V-A-P-R-E-D-E region. The tract at residues 293-375 (APVEPEKQPE…GEPVAPREDE (83 aa)) is 2 X 23 AA approximate repeats. Over residues 421-436 (LNNQIDKASSVSPTDY) the composition is skewed to polar residues. Residue H1562 coordinates Zn(2+). Residue E1563 is part of the active site. Residues H1566 and E1586 each contribute to the Zn(2+) site.

The protein belongs to the peptidase M26 family. Zn(2+) is required as a cofactor. In terms of processing, the Gram-positive cell-wall anchor motif LPXTG is located in the N-terminal part, in contrast to such motifs in other known streptococcal and staphylococcal proteins. The protease could be cleaved by the sortase and anchored in the membrane via the two potential N-terminal transmembrane domains, whereas the propeptide located prior to the LPXTG motif would remain attached to the cell wall peptidoglycan by an amide bond.

The protein resides in the secreted. The protein localises to the cell wall. It is found in the membrane. Is a virulence factor capable of inducing inflammation in the lower respiratory tract, by increasing tumor necrosis factor alpha (TNF-alpha) concentration in the lungs. Also appears to have other functions important in virulence in models of pneumonia and septicemia. This is Zinc metalloprotease ZmpB (zmpB) from Streptococcus pneumoniae serotype 4 (strain ATCC BAA-334 / TIGR4).